The sequence spans 590 residues: Leucine-rich repeat transmembrane neuronal protein 4 (590 aa).

The N-terminal stretch at 1-30 is a signal peptide; sequence MGFRLITQLKGMSVFLVLFPTLLLVMLTGA. An LRRNT domain is found at 31 to 61; it reads QRACPKNCRCDGKIVYCESHAFADIPENISG. The Extracellular portion of the chain corresponds to 31 to 424; the sequence is QRACPKNCRC…HEYEHVSFHK (394 aa). N-linked (GlcNAc...) asparagine glycosylation occurs at Asn58. LRR repeat units lie at residues 62–83, 86–107, 110–131, 134–155, 158–179, 182–203, 206–226, 230–251, 254–275, and 278–299; these read GSQG…QFAG, QLIW…AFQG, RLKE…TFHP, NLRN…QFKG, KLII…VFQD, NLDF…AFAG, KLKE…AHFP, NLRS…LTWT, SLHT…TFKC, and NLQK…TVNA. A glycan (N-linked (GlcNAc...) asparagine) is linked at Asn126. N-linked (GlcNAc...) asparagine glycosylation is present at Asn291. One can recognise an LRRCT domain in the interval 311–362; that stretch reads NMWECSRSICPLFYWLKNFKGNKESTMICAGPKHIQGEKVSDAVETYNICSD. Residues 425–445 traverse the membrane as a helical segment; that stretch reads IIAGSVALFLSVAMILLVIYV. Topologically, residues 446–590 are cytoplasmic; sequence SWKRYPASMK…PAIYLERITN (145 aa).

Belongs to the LRRTM family. As to quaternary structure, peripherally associated with AMPAR complex. AMPAR complex consists of an inner core made of 4 pore-forming GluA/GRIA proteins (GRIA1, GRIA2, GRIA3 and GRIA4) and 4 major auxiliary subunits arranged in a twofold symmetry. One of the two pairs of distinct binding sites is occupied either by CNIH2, CNIH3 or CACNG2, CACNG3. The other harbors CACNG2, CACNG3, CACNG4, CACNG8 or GSG1L. This inner core of AMPAR complex is complemented by outer core constituents binding directly to the GluA/GRIA proteins at sites distinct from the interaction sites of the inner core constituents. Outer core constituents include at least PRRT1, PRRT2, CKAMP44/SHISA9, FRRS1L and NRN1. The proteins of the inner and outer core serve as a platform for other, more peripherally associated AMPAR constituents, including LRRTM4. Alone or in combination, these auxiliary subunits control the gating and pharmacology of the AMPAR complex and profoundly impact their biogenesis and protein processing. In terms of tissue distribution, predominantly in the brain (at protein level). Also expressed in the cerebellum and other tissues.

The protein resides in the cell membrane. It is found in the postsynaptic cell membrane. Functionally, may play a role in the development and maintenance of the vertebrate nervous system. Exhibits strong synaptogenic activity, restricted to excitatory presynaptic differentiation. The chain is Leucine-rich repeat transmembrane neuronal protein 4 (Lrrtm4) from Mus musculus (Mouse).